The sequence spans 861 residues: DNA mismatch repair protein MutS (861 aa).

An ATP-binding site is contributed by 616 to 623 (GPNMGGKS).

It belongs to the DNA mismatch repair MutS family.

Functionally, this protein is involved in the repair of mismatches in DNA. It is possible that it carries out the mismatch recognition step. This protein has a weak ATPase activity. This is DNA mismatch repair protein MutS from Haemophilus influenzae (strain PittEE).